The primary structure comprises 238 residues: Ribonuclease PH (238 aa).

Residues Arg-86 and 124-126 (GTR) contribute to the phosphate site.

Belongs to the RNase PH family. As to quaternary structure, homohexameric ring arranged as a trimer of dimers.

The catalysed reaction is tRNA(n+1) + phosphate = tRNA(n) + a ribonucleoside 5'-diphosphate. In terms of biological role, phosphorolytic 3'-5' exoribonuclease that plays an important role in tRNA 3'-end maturation. Removes nucleotide residues following the 3'-CCA terminus of tRNAs; can also add nucleotides to the ends of RNA molecules by using nucleoside diphosphates as substrates, but this may not be physiologically important. Probably plays a role in initiation of 16S rRNA degradation (leading to ribosome degradation) during starvation. In Aliivibrio salmonicida (strain LFI1238) (Vibrio salmonicida (strain LFI1238)), this protein is Ribonuclease PH.